Reading from the N-terminus, the 170-residue chain is Probable peptide methionine sulfoxide reductase (170 aa).

It belongs to the MsrA Met sulfoxide reductase family.

The protein resides in the cytoplasm. It is found in the nucleus. It carries out the reaction L-methionyl-[protein] + [thioredoxin]-disulfide + H2O = L-methionyl-(S)-S-oxide-[protein] + [thioredoxin]-dithiol. The catalysed reaction is [thioredoxin]-disulfide + L-methionine + H2O = L-methionine (S)-S-oxide + [thioredoxin]-dithiol. Its function is as follows. Has an important function as a repair enzyme for proteins that have been inactivated by oxidation. Catalyzes the reversible oxidation-reduction of methionine sulfoxide in proteins to methionine. This chain is Probable peptide methionine sulfoxide reductase (mxr1), found in Schizosaccharomyces pombe (strain 972 / ATCC 24843) (Fission yeast).